The sequence spans 184 residues: UPF0669 protein C6orf120 homolog (184 aa).

An N-terminal signal peptide occupies residues 1–23; sequence MAAPWTGALLLLLASQAVSSAQA. N-linked (GlcNAc...) asparagine glycosylation is present at N47.

This sequence belongs to the UPF0669 family.

The protein resides in the secreted. May be involved in induction of apoptosis in CD4(+) T-cells, but not CD8(+) T-cells or hepatocytes. The polypeptide is UPF0669 protein C6orf120 homolog (Bos taurus (Bovine)).